We begin with the raw amino-acid sequence, 430 residues long: Dihydroorotase (430 aa).

Positions 57 and 59 each coordinate Zn(2+). Residues 59-61 (HLR) and asparagine 91 each bind substrate. Residues aspartate 151, histidine 178, and histidine 231 each coordinate Zn(2+). A substrate-binding site is contributed by asparagine 277. Aspartate 304 contributes to the Zn(2+) binding site. The active site involves aspartate 304. Substrate contacts are provided by residues histidine 308 and 322–323 (PG).

It belongs to the metallo-dependent hydrolases superfamily. DHOase family. Class I DHOase subfamily. It depends on Zn(2+) as a cofactor.

The catalysed reaction is (S)-dihydroorotate + H2O = N-carbamoyl-L-aspartate + H(+). The protein operates within pyrimidine metabolism; UMP biosynthesis via de novo pathway; (S)-dihydroorotate from bicarbonate: step 3/3. In terms of biological role, catalyzes the reversible cyclization of carbamoyl aspartate to dihydroorotate. This Mycobacterium leprae (strain TN) protein is Dihydroorotase.